The following is a 352-amino-acid chain: C-C chemokine receptor type 5 (352 aa).

At 1–30 (MDYQVSSPIYDIDYGPSEPCRKIDVKQMGA) the chain is on the extracellular side. At Tyr3 the chain carries Sulfotyrosine. O-linked (GalNAc...) serine glycans are attached at residues Ser6 and Ser7. Sulfotyrosine is present on residues Tyr10 and Tyr14. Cystine bridges form between Cys20/Cys269 and Cys101/Cys178. A helical membrane pass occupies residues 31–58 (QLLPPLYSLVFLFGFVGNMLVVLILINC). Residues 59-68 (KRLKSMTDIY) are Cytoplasmic-facing. A helical transmembrane segment spans residues 69 to 89 (LLNLAISDLLFLFTIPFWAHY). Over 90 to 102 (AAGQWDFGNTMCQ) the chain is Extracellular. A helical membrane pass occupies residues 103–124 (FLTALYFIGFFSGIFFIILLTI). The Cytoplasmic segment spans residues 125-141 (DRYLAIVHAVFALKART). A helical membrane pass occupies residues 142–166 (VTFGVVTSVITWVVAVFASLPGIIF). Over 167 to 198 (TRSQKEGYHYSCSPHFPFSQYRFWKNFETLKM) the chain is Extracellular. A helical membrane pass occupies residues 199-218 (VILGLVLPLLVMVICYSGIL). The Cytoplasmic portion of the chain corresponds to 219 to 235 (KTLLRCRNEKKRHRAVR). The chain crosses the membrane as a helical span at residues 236–260 (LIFTIMIVYFLFWAPYNIVLLINTY). Residues 261 to 277 (PDFFGVNNCNSSNRLDQ) lie on the Extracellular side of the membrane. The chain crosses the membrane as a helical span at residues 278–301 (AMQVTETLGMTHCCVNPIIYAFVG). The Cytoplasmic portion of the chain corresponds to 302–352 (EKFRNYLVIFFQKHIAKRFCKCCSIFQKEAPERANSVYTRSTGEQEISVGL). S-palmitoyl cysteine attachment occurs at residues Cys321, Cys323, and Cys324. 3 positions are modified to phosphoserine; by BARK1: Ser337, Ser342, and Ser349.

Belongs to the G-protein coupled receptor 1 family. As to quaternary structure, interacts with PRAF2. Efficient ligand binding to CCL3/MIP-1alpha and CCL4/MIP-1beta requires sulfation, O-glycosylation and sialic acid modifications. Glycosylation on Ser-6 is required for efficient binding of CCL4. Interacts with GRK2. Interacts with ARRB1 and ARRB2. Interacts with CNIH4. Interacts with S100A4; this interaction stimulates T-lymphocyte chemotaxis. Post-translationally, sulfated on at least 2 of the N-terminal tyrosines. Sulfation is required for efficient binding of the chemokines, CCL3 and CCL4. Palmitoylation in the C-terminal is important for cell surface expression. In terms of processing, phosphorylation on serine residues in the C-terminal is stimulated by binding CC chemokines especially by APO-RANTES. Post-translationally, O-glycosylated, but not N-glycosylated. Ser-6 appears to be the major site even if Ser-7 may be also O-glycosylated. Also sialylated glycans present which contribute to chemokine binding. Ser-17 may also be glycosylated and, if so, with small moieties such as a T-antigen.

The protein localises to the cell membrane. Functionally, receptor for a number of inflammatory CC-chemokines including CCL3/MIP-1-alpha, CCL4/MIP-1-beta and RANTES and subsequently transduces a signal by increasing the intracellular calcium ion level. May play a role in the control of granulocytic lineage proliferation or differentiation. Participates in T-lymphocyte migration to the infection site by acting as a chemotactic receptor. The protein is C-C chemokine receptor type 5 (CCR5) of Saimiri sciureus (Common squirrel monkey).